The following is a 311-amino-acid chain: MSVAAEGRRLLRLEVRNAQTPIERKPPWIKTRARIGPEYTELKNLVRREGLHTVCEEAGCPNIFECWEDREATFLIGGDQCTRRCDFCQIDTGKPAELDRDEPRRVADSVRTMGLRYATVTGVARDDLPDGGAWLYAATVRAIKELNPSTGVELLIPDFNGEPTRLAEVFESGPEVLAHNVETVPRIFKRIRPAFTYRRSLGVLTAARDAGLVTKSNLILGLGETSDEVRTALGDLRDAGCDIVTITQYLRPSARHHPVERWVKPEEFVQFARFAEGLGFAGVLAGPLVRSSYRAGRLYEQARNSRALASR.

[4Fe-4S] cluster-binding residues include Cys-55, Cys-60, Cys-66, Cys-81, Cys-85, Cys-88, and Ser-292. The region spanning 67-281 is the Radical SAM core domain; sequence WEDREATFLI…ARFAEGLGFA (215 aa).

It belongs to the radical SAM superfamily. Lipoyl synthase family. [4Fe-4S] cluster serves as cofactor.

Its subcellular location is the cytoplasm. It carries out the reaction [[Fe-S] cluster scaffold protein carrying a second [4Fe-4S](2+) cluster] + N(6)-octanoyl-L-lysyl-[protein] + 2 oxidized [2Fe-2S]-[ferredoxin] + 2 S-adenosyl-L-methionine + 4 H(+) = [[Fe-S] cluster scaffold protein] + N(6)-[(R)-dihydrolipoyl]-L-lysyl-[protein] + 4 Fe(3+) + 2 hydrogen sulfide + 2 5'-deoxyadenosine + 2 L-methionine + 2 reduced [2Fe-2S]-[ferredoxin]. It functions in the pathway protein modification; protein lipoylation via endogenous pathway; protein N(6)-(lipoyl)lysine from octanoyl-[acyl-carrier-protein]: step 2/2. Catalyzes the radical-mediated insertion of two sulfur atoms into the C-6 and C-8 positions of the octanoyl moiety bound to the lipoyl domains of lipoate-dependent enzymes, thereby converting the octanoylated domains into lipoylated derivatives. In Mycobacterium bovis (strain ATCC BAA-935 / AF2122/97), this protein is Lipoyl synthase.